A 187-amino-acid polypeptide reads, in one-letter code: Ribosome-recycling factor (187 aa).

This sequence belongs to the RRF family.

It localises to the cytoplasm. In terms of biological role, responsible for the release of ribosomes from messenger RNA at the termination of protein biosynthesis. May increase the efficiency of translation by recycling ribosomes from one round of translation to another. This is Ribosome-recycling factor from Bradyrhizobium sp. (strain BTAi1 / ATCC BAA-1182).